A 308-amino-acid polypeptide reads, in one-letter code: Aspartate carbamoyltransferase catalytic subunit (308 aa).

The carbamoyl phosphate site is built by arginine 55 and threonine 56. Residue lysine 85 coordinates L-aspartate. The carbamoyl phosphate site is built by arginine 106, histidine 135, and glutamine 138. The L-aspartate site is built by arginine 168 and arginine 229. Carbamoyl phosphate contacts are provided by leucine 267 and proline 268.

Belongs to the aspartate/ornithine carbamoyltransferase superfamily. ATCase family. In terms of assembly, heterododecamer (2C3:3R2) of six catalytic PyrB chains organized as two trimers (C3), and six regulatory PyrI chains organized as three dimers (R2).

It carries out the reaction carbamoyl phosphate + L-aspartate = N-carbamoyl-L-aspartate + phosphate + H(+). Its pathway is pyrimidine metabolism; UMP biosynthesis via de novo pathway; (S)-dihydroorotate from bicarbonate: step 2/3. Functionally, catalyzes the condensation of carbamoyl phosphate and aspartate to form carbamoyl aspartate and inorganic phosphate, the committed step in the de novo pyrimidine nucleotide biosynthesis pathway. This is Aspartate carbamoyltransferase catalytic subunit from Laribacter hongkongensis (strain HLHK9).